We begin with the raw amino-acid sequence, 132 residues long: UPF0357 protein YCL012C (132 aa).

Positions 1-25 are cleaved as a signal peptide; sequence MWDLFYFKVFFWVVLISLCIFMVHR.

Belongs to the UPF0357 family.

The chain is UPF0357 protein YCL012C (YCL012C) from Saccharomyces bayanus (Yeast).